Here is a 571-residue protein sequence, read N- to C-terminus: Arginine--tRNA ligase (571 aa).

Residues 122–132 carry the 'HIGH' region motif; the sequence is PNIAKEMHVGH.

Belongs to the class-I aminoacyl-tRNA synthetase family. As to quaternary structure, monomer.

Its subcellular location is the cytoplasm. The enzyme catalyses tRNA(Arg) + L-arginine + ATP = L-arginyl-tRNA(Arg) + AMP + diphosphate. The protein is Arginine--tRNA ligase of Buchnera aphidicola subsp. Cinara cedri (strain Cc).